Here is a 296-residue protein sequence, read N- to C-terminus: 33 kDa chaperonin (296 aa).

Cystine bridges form between Cys238–Cys240 and Cys271–Cys274.

The protein belongs to the HSP33 family. Under oxidizing conditions two disulfide bonds are formed involving the reactive cysteines. Under reducing conditions zinc is bound to the reactive cysteines and the protein is inactive.

It localises to the cytoplasm. Redox regulated molecular chaperone. Protects both thermally unfolding and oxidatively damaged proteins from irreversible aggregation. Plays an important role in the bacterial defense system toward oxidative stress. The polypeptide is 33 kDa chaperonin (Clostridium botulinum (strain 657 / Type Ba4)).